The chain runs to 79 residues: MYYVAQVIKDECSKYNCKQCTLFCPEPNTLMYTDEGHHAYVNTLRCKGCALCVYVCSELLKRDSIEMVYAENRDVAGVR.

2 4Fe-4S ferredoxin-type domains span residues 3-35 and 37-65; these read YVAQVIKDECSKYNCKQCTLFCPEPNTLMYTDE and HHAYVNTLRCKGCALCVYVCSELLKRDSI. The [4Fe-4S] cluster site is built by Cys-12, Cys-17, Cys-20, Cys-24, Cys-46, Cys-49, Cys-52, and Cys-56.

Heterotetramer of one alpha, one beta, one delta and one gamma chain. Requires [4Fe-4S] cluster as cofactor.

This Aquifex aeolicus (strain VF5) protein is Ferredoxin oxidoreductase 1 subunit ForD (forD1).